Reading from the N-terminus, the 149-residue chain is Histone H2B.3, sperm (149 aa).

A disordered region spans residues 1-57 (MPRSPAKTSPRKGSPRKGSPRKGSPSRKASPKRGGKGAKRAGKGGRRRRVVKRRRRR). Short sequence motifs (SPKK motif) lie at residues 4–7 (SPAK), 9–12 (SPRK), 14–17 (SPRK), 19–22 (SPRK), 24–27 (SPSR), and 30–33 (SPKR). The segment covering 9-20 (SPRKGSPRKGSP) has biased composition (basic residues). Phosphoserine occurs at positions 19, 24, and 30. Basic residues predominate over residues 29–57 (ASPKRGGKGAKRAGKGGRRRRVVKRRRRR). S136 is a glycosylation site (O-linked (GlcNAc) serine). A Glycyl lysine isopeptide (Lys-Gly) (interchain with G-Cter in ubiquitin) cross-link involves residue K144.

Belongs to the histone H2B family. In terms of assembly, the nucleosome is a histone octamer containing two molecules each of H2A, H2B, H3 and H4 assembled in one H3-H4 heterotetramer and two H2A-H2B heterodimers. The octamer wraps approximately 147 bp of DNA. In terms of processing, monoubiquitination of Lys-144 gives a specific tag for epigenetic transcriptional activation and is also prerequisite for histone H3 'Lys-4' and 'Lys-79' methylation. Phosphorylated on SPKK motifs 4, 5 and 6; which may regulate DNA binding. Dephosphorylated during maturation of spermatids to mature sperm and rephosphorylated at fertilization. Post-translationally, glcNAcylation at Ser-136 promotes monoubiquitination of Lys-144. It fluctuates in response to extracellular glucose, and associates with transcribed genes.

Its subcellular location is the nucleus. It localises to the chromosome. In terms of biological role, core component of nucleosome. Nucleosomes wrap and compact DNA into chromatin, limiting DNA accessibility to the cellular machineries which require DNA as a template. Histones thereby play a central role in transcription regulation, DNA repair, DNA replication and chromosomal stability. DNA accessibility is regulated via a complex set of post-translational modifications of histones, also called histone code, and nucleosome remodeling. The polypeptide is Histone H2B.3, sperm (Parechinus angulosus (Angulate sea urchin)).